The following is a 140-amino-acid chain: Large ribosomal subunit protein bL17 (140 aa).

It belongs to the bacterial ribosomal protein bL17 family. As to quaternary structure, part of the 50S ribosomal subunit. Contacts protein L32.

The sequence is that of Large ribosomal subunit protein bL17 from Paracoccus denitrificans (strain Pd 1222).